A 217-amino-acid chain; its full sequence is 5'-methylthioadenosine/S-adenosylhomocysteine nucleosidase (217 aa).

The Proton acceptor role is filled by glutamate 11. Residues glycine 77, valine 139, and 159-160 (MD) each bind substrate. The active-site Proton donor is aspartate 183.

It belongs to the PNP/UDP phosphorylase family. MtnN subfamily.

It catalyses the reaction S-adenosyl-L-homocysteine + H2O = S-(5-deoxy-D-ribos-5-yl)-L-homocysteine + adenine. It carries out the reaction S-methyl-5'-thioadenosine + H2O = 5-(methylsulfanyl)-D-ribose + adenine. The catalysed reaction is 5'-deoxyadenosine + H2O = 5-deoxy-D-ribose + adenine. The protein operates within amino-acid biosynthesis; L-methionine biosynthesis via salvage pathway; S-methyl-5-thio-alpha-D-ribose 1-phosphate from S-methyl-5'-thioadenosine (hydrolase route): step 1/2. In terms of biological role, catalyzes the irreversible cleavage of the glycosidic bond in both 5'-methylthioadenosine (MTA) and S-adenosylhomocysteine (SAH/AdoHcy) to adenine and the corresponding thioribose, 5'-methylthioribose and S-ribosylhomocysteine, respectively. Also cleaves 5'-deoxyadenosine, a toxic by-product of radical S-adenosylmethionine (SAM) enzymes, into 5-deoxyribose and adenine. This chain is 5'-methylthioadenosine/S-adenosylhomocysteine nucleosidase (mtnN), found in Thermotoga maritima (strain ATCC 43589 / DSM 3109 / JCM 10099 / NBRC 100826 / MSB8).